Here is a 326-residue protein sequence, read N- to C-terminus: MLTLARQQQRQNIRWLLCLSVLMLLALLLSLCAGEQWISLGDWFTPRGELFVWQIRLPRTLAVLLVGAALAISGAVMQALFENPLAEPGLLGVSNGAGVGLIAAVLLGQGQLPNWALGLCAIAGALIITLILLRFARRHLSTSRLLLAGVALGIICSALMTWAIYFSTSVDLRQLMYWMMGGFGGVDWRQSWLMLALIPVLLWICCQSRPMNMLALGEISARQLGLPLWFWRNVLVAATGWMVGVSVALAGAIGFIGLVIPHILRLCGLTDHRVLLPGCALAGASALLLADIVARLALAAAELPIGVVTATLGAPVFIWLLLKARR.

The next 9 membrane-spanning stretches (helical) occupy residues 15–35 (WLLC…CAGE), 61–81 (LAVL…QALF), 88–108 (PGLL…VLLG), 112–132 (LPNW…TLIL), 146–166 (LLAG…AIYF), 184–204 (GGVD…LLWI), 240–260 (GWMV…GLVI), 274–294 (VLLP…DIVA), and 302–322 (ELPI…WLLL).

It belongs to the binding-protein-dependent transport system permease family. FecCD subfamily. The complex is composed of two ATP-binding proteins (BtuD), two transmembrane proteins (BtuC) and a solute-binding protein (BtuF).

It localises to the cell inner membrane. Its function is as follows. Part of the ABC transporter complex BtuCDF involved in vitamin B12 import. Involved in the translocation of the substrate across the membrane. The sequence is that of Vitamin B12 import system permease protein BtuC from Shigella boydii serotype 18 (strain CDC 3083-94 / BS512).